Here is a 170-residue protein sequence, read N- to C-terminus: tRNA-splicing endonuclease (170 aa).

Catalysis depends on residues tyrosine 110, histidine 116, and lysine 147.

This sequence belongs to the tRNA-intron endonuclease family. Archaeal short subfamily. As to quaternary structure, homotetramer; although the tetramer contains four active sites, only two participate in the cleavage. Therefore, it should be considered as a dimer of dimers.

The enzyme catalyses pretRNA = a 3'-half-tRNA molecule with a 5'-OH end + a 5'-half-tRNA molecule with a 2',3'-cyclic phosphate end + an intron with a 2',3'-cyclic phosphate and a 5'-hydroxyl terminus.. Its function is as follows. Endonuclease that removes tRNA introns. Cleaves pre-tRNA at the 5'- and 3'-splice sites to release the intron. The products are an intron and two tRNA half-molecules bearing 2',3' cyclic phosphate and 5'-OH termini. Recognizes a pseudosymmetric substrate in which 2 bulged loops of 3 bases are separated by a stem of 4 bp. The chain is tRNA-splicing endonuclease from Pyrococcus abyssi (strain GE5 / Orsay).